The chain runs to 151 residues: MLP-like protein 329 (151 aa).

Belongs to the MLP family.

The protein is MLP-like protein 329 (MLP329) of Arabidopsis thaliana (Mouse-ear cress).